The primary structure comprises 688 residues: DNA ligase (688 aa).

Residues 38–42 (DEEYD), 87–88 (SL), and glutamate 118 contribute to the NAD(+) site. Lysine 120 serves as the catalytic N6-AMP-lysine intermediate. 4 residues coordinate NAD(+): arginine 141, glutamate 175, lysine 291, and lysine 315. 4 residues coordinate Zn(2+): cysteine 409, cysteine 412, cysteine 428, and cysteine 433. A BRCT domain is found at 590 to 679 (MKLDILKGLT…AELKGYNFDE (90 aa)).

The protein belongs to the NAD-dependent DNA ligase family. LigA subfamily. Requires Mg(2+) as cofactor. Mn(2+) serves as cofactor.

It carries out the reaction NAD(+) + (deoxyribonucleotide)n-3'-hydroxyl + 5'-phospho-(deoxyribonucleotide)m = (deoxyribonucleotide)n+m + AMP + beta-nicotinamide D-nucleotide.. Functionally, DNA ligase that catalyzes the formation of phosphodiester linkages between 5'-phosphoryl and 3'-hydroxyl groups in double-stranded DNA using NAD as a coenzyme and as the energy source for the reaction. It is essential for DNA replication and repair of damaged DNA. The chain is DNA ligase from Thermotoga petrophila (strain ATCC BAA-488 / DSM 13995 / JCM 10881 / RKU-1).